Reading from the N-terminus, the 433-residue chain is Gamma-glutamyl phosphate reductase 1 (433 aa).

It belongs to the gamma-glutamyl phosphate reductase family.

It is found in the cytoplasm. It carries out the reaction L-glutamate 5-semialdehyde + phosphate + NADP(+) = L-glutamyl 5-phosphate + NADPH + H(+). It participates in amino-acid biosynthesis; L-proline biosynthesis; L-glutamate 5-semialdehyde from L-glutamate: step 2/2. In terms of biological role, catalyzes the NADPH-dependent reduction of L-glutamate 5-phosphate into L-glutamate 5-semialdehyde and phosphate. The product spontaneously undergoes cyclization to form 1-pyrroline-5-carboxylate. The polypeptide is Gamma-glutamyl phosphate reductase 1 (Synechocystis sp. (strain ATCC 27184 / PCC 6803 / Kazusa)).